Reading from the N-terminus, the 471-residue chain is Cysteine--tRNA ligase (471 aa).

Residue Cys-29 participates in Zn(2+) binding. The 'HIGH' region motif lies at 31 to 41 (PTVYNYIHIGN). Residues Cys-209, His-234, and Glu-238 each contribute to the Zn(2+) site. Positions 266-270 (KMSKS) match the 'KMSKS' region motif. Lys-269 is an ATP binding site.

It belongs to the class-I aminoacyl-tRNA synthetase family. In terms of assembly, monomer. Zn(2+) serves as cofactor.

The protein resides in the cytoplasm. The enzyme catalyses tRNA(Cys) + L-cysteine + ATP = L-cysteinyl-tRNA(Cys) + AMP + diphosphate. The protein is Cysteine--tRNA ligase of Listeria monocytogenes serovar 1/2a (strain ATCC BAA-679 / EGD-e).